The chain runs to 570 residues: Dwarfin sma-4 (570 aa).

The interval 115–134 (SSQASSQPPPTPTVNPTPIP) is disordered. The segment covering 121–134 (QPPPTPTVNPTPIP) has biased composition (pro residues). Residues 150-273 (QISHVLQCYQ…YERVVSNRIT (124 aa)) form the MH1 domain. Zn(2+) contacts are provided by Cys203, Cys247, Cys258, and His263. Residues 350–570 (WCSIIYYELD…LKNSSQFGSS (221 aa)) form the MH2 domain.

The protein belongs to the dwarfin/SMAD family.

The protein resides in the cytoplasm. Its subcellular location is the nucleus. Functionally, involved in TGF-beta pathway. The sequence is that of Dwarfin sma-4 (sma-4) from Caenorhabditis elegans.